Consider the following 158-residue polypeptide: Cyclic pyranopterin monophosphate synthase (158 aa).

Substrate-binding positions include 75 to 77 (LCH) and 113 to 114 (ME). Residue D128 is part of the active site.

This sequence belongs to the MoaC family. As to quaternary structure, homohexamer; trimer of dimers.

The enzyme catalyses (8S)-3',8-cyclo-7,8-dihydroguanosine 5'-triphosphate = cyclic pyranopterin phosphate + diphosphate. Its pathway is cofactor biosynthesis; molybdopterin biosynthesis. Functionally, catalyzes the conversion of (8S)-3',8-cyclo-7,8-dihydroguanosine 5'-triphosphate to cyclic pyranopterin monophosphate (cPMP). The chain is Cyclic pyranopterin monophosphate synthase from Vibrio campbellii (strain ATCC BAA-1116).